Here is a 356-residue protein sequence, read N- to C-terminus: MIESIIYNVAVMVAGIYLFHRLQYSENKIMVFSKGYVTVLMTIVALLLAAYPIPFHQEYLVHLTFVPLLFLGRFTNMGYTLVSAVIVALVEVFAFGNSLLYGVVLIVIGIIVSMVGPFLKQNDIVALVILNLISVIILLILSIFSPLYDLTEIAFLVPISFVLTIASAITFVDMWHFFSLVTRYENEDKYDYLTGLGNVKEFDRHLNHVSQIAEDKNESLALLLIDIDGFKDVNDTYSHKSGDAVLKQMSQLLKNYVPKQFQIFRNGGEEFSVVIRNYSLDQSVKLAENIRTGVEKSSFHLPNKEVIKLSVSIGVGYLSQDDHKSQRKVFKDADDMVHVAKNEGRNQVMFNPIIKL.

6 helical membrane-spanning segments follow: residues 2-22, 35-55, 76-96, 99-119, 124-144, and 152-172; these read IESI…FHRL, GYVT…PIPF, NMGY…FAFG, LLYG…GPFL, IVAL…LSIF, and EIAF…ITFV. Positions 218-353 constitute a GGDEF domain; the sequence is ESLALLLIDI…GRNQVMFNPI (136 aa).

The protein resides in the cell membrane. This is an uncharacterized protein from Staphylococcus haemolyticus (strain JCSC1435).